A 72-amino-acid polypeptide reads, in one-letter code: MATKDTGGGQQKATRSTEEVEEQAQDAQASEDLAERQEKLSDDVDSVLDEIDDVLEENAEDFVRSFVQKGGQ.

The segment covering 1–10 (MATKDTGGGQ) has biased composition (gly residues). Positions 1 to 45 (MATKDTGGGQQKATRSTEEVEEQAQDAQASEDLAERQEKLSDDVD) are disordered. A coiled-coil region spans residues 10–60 (QQKATRSTEEVEEQAQDAQASEDLAERQEKLSDDVDSVLDEIDDVLEENAE). The segment at 28–66 (QASEDLAERQEKLSDDVDSVLDEIDDVLEENAEDFVRSF) is ARC ATPase binding. Residues 33-42 (LAERQEKLSD) are compositionally biased toward basic and acidic residues. Glutamine 72 bears the Deamidated glutamine mark. Residue glutamine 72 forms an Isoglutamyl lysine isopeptide (Gln-Lys) (interchain with K-? in acceptor proteins) linkage.

The protein belongs to the prokaryotic ubiquitin-like protein family. As to quaternary structure, strongly interacts with the proteasome-associated ATPase ARC through a hydrophobic interface; the interacting region of Pup lies in its C-terminal half. There is one Pup binding site per ARC hexamer ring. Post-translationally, is modified by deamidation of its C-terminal glutamine to glutamate by the deamidase Dop, a prerequisite to the subsequent pupylation process.

Its pathway is protein degradation; proteasomal Pup-dependent pathway. Protein modifier that is covalently attached to lysine residues of substrate proteins, thereby targeting them for proteasomal degradation. The tagging system is termed pupylation. This is Prokaryotic ubiquitin-like protein Pup from Streptomyces griseus subsp. griseus (strain JCM 4626 / CBS 651.72 / NBRC 13350 / KCC S-0626 / ISP 5235).